A 375-amino-acid polypeptide reads, in one-letter code: 23S rRNA (uracil(747)-C(5))-methyltransferase RlmC (375 aa).

C3, C11, C14, and C87 together coordinate [4Fe-4S] cluster. S-adenosyl-L-methionine-binding residues include Q212, F241, E262, and N307. C334 (nucleophile) is an active-site residue.

The protein belongs to the class I-like SAM-binding methyltransferase superfamily. RNA M5U methyltransferase family. RlmC subfamily.

The enzyme catalyses uridine(747) in 23S rRNA + S-adenosyl-L-methionine = 5-methyluridine(747) in 23S rRNA + S-adenosyl-L-homocysteine + H(+). Its function is as follows. Catalyzes the formation of 5-methyl-uridine at position 747 (m5U747) in 23S rRNA. The chain is 23S rRNA (uracil(747)-C(5))-methyltransferase RlmC from Escherichia coli O17:K52:H18 (strain UMN026 / ExPEC).